Consider the following 292-residue polypeptide: Cytidine deaminase (292 aa).

2 CMP/dCMP-type deaminase domains span residues 47 to 167 (TTLK…FGPK) and 186 to 292 (DHQD…YYSL). Position 88-90 (88-90 (NQE)) interacts with substrate. Histidine 101 is a Zn(2+) binding site. The Proton donor role is filled by glutamate 103. 2 residues coordinate Zn(2+): cysteine 128 and cysteine 131.

The protein belongs to the cytidine and deoxycytidylate deaminase family. Homodimer. Zn(2+) serves as cofactor.

The enzyme catalyses cytidine + H2O + H(+) = uridine + NH4(+). It carries out the reaction 2'-deoxycytidine + H2O + H(+) = 2'-deoxyuridine + NH4(+). In terms of biological role, this enzyme scavenges exogenous and endogenous cytidine and 2'-deoxycytidine for UMP synthesis. In Haemophilus influenzae (strain ATCC 51907 / DSM 11121 / KW20 / Rd), this protein is Cytidine deaminase.